Reading from the N-terminus, the 177-residue chain is MSVMFKLPLNLRQELKKPLGELIKGEIPIPYLKLKEIVNSNTLITVGDVVTENSLKVGLRPRLAIYDHKTERREYKPEIGDKGVLLTVKNPPGTITLHLLKTIKKAYSLIRRGTNVHIVVNGEEDLAAIPAVLYAPLGSFVVYGQPREGIVLIKVTSECKRRCAEIMRNMEVVRNGD.

Aspartate 48, valine 49, valine 50, aspartate 67, lysine 69, and glutamate 124 together coordinate GTP.

Belongs to the GTP-dependent DPCK family.

The catalysed reaction is 3'-dephospho-CoA + GTP = GDP + CoA + H(+). It participates in cofactor biosynthesis; coenzyme A biosynthesis. Catalyzes the GTP-dependent phosphorylation of the 3'-hydroxyl group of dephosphocoenzyme A to form coenzyme A (CoA). The polypeptide is GTP-dependent dephospho-CoA kinase (Pyrococcus furiosus (strain ATCC 43587 / DSM 3638 / JCM 8422 / Vc1)).